Consider the following 78-residue polypeptide: Small ribosomal subunit protein uS15 (78 aa).

Belongs to the universal ribosomal protein uS15 family. In terms of assembly, part of the 30S ribosomal subunit. Forms a bridge to the 50S subunit in the 70S ribosome, contacting the 23S rRNA.

In terms of biological role, one of the primary rRNA binding proteins, it binds directly to 16S rRNA where it helps nucleate assembly of the platform of the 30S subunit by binding and bridging several RNA helices of the 16S rRNA. Its function is as follows. Forms an intersubunit bridge (bridge B4) with the 23S rRNA of the 50S subunit in the ribosome. In Karelsulcia muelleri (strain GWSS) (Sulcia muelleri), this protein is Small ribosomal subunit protein uS15.